Consider the following 306-residue polypeptide: Palmitoyl-protein thioesterase 1 (306 aa).

A signal peptide spans 1–27 (MASSCSRRLLAAALLPWCCAAWALGHL). Disulfide bonds link Cys45–Cys46, Cys96–Cys128, and Cys152–Cys160. The active site involves Ser115. 3 N-linked (GlcNAc...) asparagine glycosylation sites follow: Asn197, Asn212, and Asn232. Catalysis depends on residues Asp233 and His289.

The protein belongs to the palmitoyl-protein thioesterase family. As to quaternary structure, interacts with CLN5, ATP5F1A and ATP5F1B. Glycosylated. As to expression, highest level in testis and kidney, lower in heart, brain and lung and lowest in skeletal muscle.

The protein localises to the lysosome. It localises to the secreted. Its subcellular location is the golgi apparatus. It is found in the endoplasmic reticulum. The enzyme catalyses S-hexadecanoyl-L-cysteinyl-[protein] + H2O = L-cysteinyl-[protein] + hexadecanoate + H(+). The catalysed reaction is hexadecanoyl-CoA + H2O = hexadecanoate + CoA + H(+). It catalyses the reaction S-hexadecanoyl-N-acetylcysteamine + H2O = N-acetylcysteamine + hexadecanoate + H(+). It carries out the reaction S-hexadecanoyl-N-acetylcysteine methyl ester + H2O = N-acetylcysteine methyl ester + hexadecanoate + H(+). Its function is as follows. Has thioesterase activity against fatty acid thioesters with 14 -18 carbons, including palmitoyl-CoA, S-palmitoyl-N-acetylcysteamine, and palmitoylated proteins. In contrast to PPT2, PPT1 can hydrolyze palmitoylated proteins and palmitoylcysteine. The protein is Palmitoyl-protein thioesterase 1 (Ppt1) of Mus musculus (Mouse).